The following is a 197-amino-acid chain: Dephospho-CoA kinase (197 aa).

A DPCK domain is found at 2-197 (IIGLTGGIAS…GAIKDLANLV (196 aa)). 10–15 (ASGKST) serves as a coordination point for ATP.

This sequence belongs to the CoaE family.

The protein resides in the cytoplasm. It catalyses the reaction 3'-dephospho-CoA + ATP = ADP + CoA + H(+). Its pathway is cofactor biosynthesis; coenzyme A biosynthesis; CoA from (R)-pantothenate: step 5/5. Catalyzes the phosphorylation of the 3'-hydroxyl group of dephosphocoenzyme A to form coenzyme A. This chain is Dephospho-CoA kinase, found in Streptococcus thermophilus (strain ATCC BAA-250 / LMG 18311).